The sequence spans 54 residues: Ovomucoid (54 aa).

The Kazal-like domain maps to 4 to 54; it reads VDCSEYPKPVCSPEYMPLCGSDSKTYNNKCDFCSAVVESNGTLTLGHFGKC. 3 disulfides stabilise this stretch: Cys6-Cys36, Cys14-Cys33, and Cys22-Cys54. Asn43 carries an N-linked (GlcNAc...) asparagine glycan.

The protein resides in the secreted. The sequence is that of Ovomucoid from Casuarius casuarius (Southern cassowary).